We begin with the raw amino-acid sequence, 289 residues long: Urease accessory protein UreD (289 aa).

It belongs to the UreD family. UreD, UreF and UreG form a complex that acts as a GTP-hydrolysis-dependent molecular chaperone, activating the urease apoprotein by helping to assemble the nickel containing metallocenter of UreC. The UreE protein probably delivers the nickel.

Its subcellular location is the cytoplasm. Functionally, required for maturation of urease via the functional incorporation of the urease nickel metallocenter. This is Urease accessory protein UreD from Magnetococcus marinus (strain ATCC BAA-1437 / JCM 17883 / MC-1).